The chain runs to 193 residues: Potassium-transporting ATPase KdpC subunit (193 aa).

Residues 8–28 (VVLLIFLTLITGVAYPLLATG) form a helical membrane-spanning segment.

The protein belongs to the KdpC family. In terms of assembly, the system is composed of three essential subunits: KdpA, KdpB and KdpC.

It is found in the cell inner membrane. Part of the high-affinity ATP-driven potassium transport (or Kdp) system, which catalyzes the hydrolysis of ATP coupled with the electrogenic transport of potassium into the cytoplasm. This subunit acts as a catalytic chaperone that increases the ATP-binding affinity of the ATP-hydrolyzing subunit KdpB by the formation of a transient KdpB/KdpC/ATP ternary complex. This Photorhabdus laumondii subsp. laumondii (strain DSM 15139 / CIP 105565 / TT01) (Photorhabdus luminescens subsp. laumondii) protein is Potassium-transporting ATPase KdpC subunit.